Reading from the N-terminus, the 384-residue chain is Glutamate 5-kinase (384 aa).

Position 24 (Lys-24) interacts with ATP. The substrate site is built by Ser-64, Asp-149, and Asn-161. ATP-binding positions include 181–182 and 223–229; these read TD and TGGMRTK. Positions 288–370 constitute a PUA domain; sequence PGAILIDAGA…RDIQTLLGYT (83 aa).

Belongs to the glutamate 5-kinase family.

It localises to the cytoplasm. It catalyses the reaction L-glutamate + ATP = L-glutamyl 5-phosphate + ADP. Its pathway is amino-acid biosynthesis; L-proline biosynthesis; L-glutamate 5-semialdehyde from L-glutamate: step 1/2. In terms of biological role, catalyzes the transfer of a phosphate group to glutamate to form L-glutamate 5-phosphate. The protein is Glutamate 5-kinase of Xylella fastidiosa (strain M12).